A 426-amino-acid polypeptide reads, in one-letter code: 3-isopropylmalate dehydratase large subunit (426 aa).

[4Fe-4S] cluster-binding residues include Cys307, Cys367, and Cys370.

It belongs to the aconitase/IPM isomerase family. LeuC type 2 subfamily. Heterodimer of LeuC and LeuD. [4Fe-4S] cluster is required as a cofactor.

The catalysed reaction is (2R,3S)-3-isopropylmalate = (2S)-2-isopropylmalate. Its pathway is amino-acid biosynthesis; L-leucine biosynthesis; L-leucine from 3-methyl-2-oxobutanoate: step 2/4. Functionally, catalyzes the isomerization between 2-isopropylmalate and 3-isopropylmalate, via the formation of 2-isopropylmaleate. This is 3-isopropylmalate dehydratase large subunit from Sulfurovum sp. (strain NBC37-1).